A 185-amino-acid polypeptide reads, in one-letter code: Hypoxanthine/guanine phosphoribosyltransferase (185 aa).

The protein belongs to the purine/pyrimidine phosphoribosyltransferase family. Archaeal HPRT subfamily. As to quaternary structure, homodimer.

It localises to the cytoplasm. The catalysed reaction is IMP + diphosphate = hypoxanthine + 5-phospho-alpha-D-ribose 1-diphosphate. It carries out the reaction GMP + diphosphate = guanine + 5-phospho-alpha-D-ribose 1-diphosphate. It functions in the pathway purine metabolism; IMP biosynthesis via salvage pathway; IMP from hypoxanthine: step 1/1. Its function is as follows. Catalyzes a salvage reaction resulting in the formation of IMP that is energically less costly than de novo synthesis. The protein is Hypoxanthine/guanine phosphoribosyltransferase of Methanococcus vannielii (strain ATCC 35089 / DSM 1224 / JCM 13029 / OCM 148 / SB).